The chain runs to 73 residues: Large ribosomal subunit protein uL29 (73 aa).

It belongs to the universal ribosomal protein uL29 family.

In Saccharolobus solfataricus (strain ATCC 35092 / DSM 1617 / JCM 11322 / P2) (Sulfolobus solfataricus), this protein is Large ribosomal subunit protein uL29 (rpl29).